Consider the following 311-residue polypeptide: Mycinamicin-resistance protein MyrB (311 aa).

Residues N27, L29, G54, E75, and D98 each coordinate S-adenosyl-L-methionine. The segment at 272–311 is disordered; that stretch reads PAPAGRSVRARPGSVGPDRSLPPRGLRSGPPRARRRGGGA. Residues 293–302 show a composition bias toward low complexity; it reads PPRGLRSGPP.

It belongs to the class I-like SAM-binding methyltransferase superfamily. rRNA adenine N(6)-methyltransferase family.

Its function is as follows. Confers resistance to macrolide, lincosamide and streptogramin B antibiotics. In Micromonospora griseorubida, this protein is Mycinamicin-resistance protein MyrB (myrB).